Here is a 542-residue protein sequence, read N- to C-terminus: Chaperonin GroEL 1 (542 aa).

ATP contacts are provided by residues 29–32 (TIGP), 86–90 (DGTTT), G415, 479–481 (NAA), and D495.

Belongs to the chaperonin (HSP60) family. As to quaternary structure, forms a cylinder of 14 subunits composed of two heptameric rings stacked back-to-back. Interacts with the co-chaperonin GroES.

It is found in the cytoplasm. It carries out the reaction ATP + H2O + a folded polypeptide = ADP + phosphate + an unfolded polypeptide.. Together with its co-chaperonin GroES, plays an essential role in assisting protein folding. The GroEL-GroES system forms a nano-cage that allows encapsulation of the non-native substrate proteins and provides a physical environment optimized to promote and accelerate protein folding. The chain is Chaperonin GroEL 1 from Streptomyces avermitilis (strain ATCC 31267 / DSM 46492 / JCM 5070 / NBRC 14893 / NCIMB 12804 / NRRL 8165 / MA-4680).